Here is a 363-residue protein sequence, read N- to C-terminus: tRNA N6-adenosine threonylcarbamoyltransferase (363 aa).

Fe cation-binding residues include histidine 117 and histidine 121. Substrate is bound by residues 139–143 (LVSGG), aspartate 172, glycine 185, and asparagine 287. Aspartate 315 serves as a coordination point for Fe cation.

This sequence belongs to the KAE1 / TsaD family. The cofactor is Fe(2+).

It localises to the cytoplasm. The enzyme catalyses L-threonylcarbamoyladenylate + adenosine(37) in tRNA = N(6)-L-threonylcarbamoyladenosine(37) in tRNA + AMP + H(+). In terms of biological role, required for the formation of a threonylcarbamoyl group on adenosine at position 37 (t(6)A37) in tRNAs that read codons beginning with adenine. Is involved in the transfer of the threonylcarbamoyl moiety of threonylcarbamoyl-AMP (TC-AMP) to the N6 group of A37, together with TsaE and TsaB. TsaD likely plays a direct catalytic role in this reaction. In Cereibacter sphaeroides (strain ATCC 17025 / ATH 2.4.3) (Rhodobacter sphaeroides), this protein is tRNA N6-adenosine threonylcarbamoyltransferase.